A 263-amino-acid chain; its full sequence is Ribonuclease HII (263 aa).

The region spanning 71-262 (QAIAGIDEVG…VKSMCCDSTN (192 aa)) is the RNase H type-2 domain. The a divalent metal cation site is built by Asp-77, Glu-78, and Asp-172.

It belongs to the RNase HII family. Requires Mn(2+) as cofactor. It depends on Mg(2+) as a cofactor.

Its subcellular location is the cytoplasm. It carries out the reaction Endonucleolytic cleavage to 5'-phosphomonoester.. Endonuclease that specifically degrades the RNA of RNA-DNA hybrids. This Streptococcus pyogenes serotype M5 (strain Manfredo) protein is Ribonuclease HII.